The following is a 63-amino-acid chain: Beta-defensin 5 (63 aa).

Positions 1-22 (MRIHYLLFSFLLVLLSPLSVFT) are cleaved as a signal peptide. Gln-23 bears the Pyrrolidone carboxylic acid mark. 3 cysteine pairs are disulfide-bonded: Cys-31–Cys-59, Cys-38–Cys-52, and Cys-42–Cys-60.

Belongs to the beta-defensin family.

It localises to the secreted. In terms of biological role, has antibacterial activity. The chain is Beta-defensin 5 (Defb5) from Rattus norvegicus (Rat).